We begin with the raw amino-acid sequence, 672 residues long: F(420)H(2) dehydrogenase subunit L (672 aa).

16 helical membrane passes run 8-28 (EFAFLIPLLPALAFAITFFFG), 37-57 (IVPILAIAASFVISFAITLGL), 79-99 (ILIDPLAAVMLSMVSFVSLLI), 136-156 (ILQLFVSWELVGLCSYLLIGF), 179-199 (VMFLTGIIVLTSDLLKVSGGF), 225-245 (ILGFEISHLTIITLLFFGGAV), 265-285 (TTVSALIHAATMVTAGVYLVA), 298-318 (LMVVAYFGGFTALFAGTMGIV), 337-357 (MMLGLGLGTAIGLEAVGISLF), 360-380 (INHAFFKALLFLCAGSVIHAV), 394-414 (VMPITAATMTIAALALAGFGI), 447-467 (YVFSILAALLTSIYIFRLIFM), 483-503 (PAIMTIPLSILAIFALAFGAL), 545-565 (LAVLWPPVIVALAGFAIAFVI), 601-621 (FSIGIVYGIIAFLTQVVDVII), and 652-672 (TALIAGVSLLIILVKLIMEVL).

The protein belongs to the complex I subunit 5 family. In terms of assembly, the FPO complex is composed of at least 13 different subunits. FpoA, FpoH, FpoJ, FpoK, FpoL, FpoM and FpoN proteins constitute the membrane sector of the complex.

It localises to the cell membrane. It catalyses the reaction methanophenazine + reduced coenzyme F420-(gamma-L-Glu)(n) = dihydromethanophenazine + oxidized coenzyme F420-(gamma-L-Glu)(n) + H(+). Functionally, component of the F(420)H(2) dehydrogenase (FPO complex) which is part of the energy-conserving F(420)H(2):heterodisulfide oxidoreductase system. The membrane-bound electron transfer system of the complex plays an important role in the metabolism of methylotrophic methanogens when the organisms grow on methanol or methylamines. Catalyzes the oxidation of methanophenazine to dihydromethanophenazine. It shuttles electrons from F(420)H(2), via FAD and iron-sulfur (Fe-S) centers, to methanophenazine (an electron carrier in the membrane). It couples the redox reaction to proton translocation (for every two electrons transferred, two hydrogen ions are translocated across the cytoplasmic membrane), and thus conserves the redox energy in a proton gradient. It also catalyzes the oxidation of F(420)H(2) with quinones such as 2,3-dimethyl-1,4-naphthoquinone, 2-methyl-1,4-naphthoquinone and tetramethyl-p-benzoquinone. This Methanosarcina mazei (strain ATCC BAA-159 / DSM 3647 / Goe1 / Go1 / JCM 11833 / OCM 88) (Methanosarcina frisia) protein is F(420)H(2) dehydrogenase subunit L (fpoL).